A 126-amino-acid chain; its full sequence is Large ribosomal subunit protein bL12 (126 aa).

It belongs to the bacterial ribosomal protein bL12 family. As to quaternary structure, homodimer. Part of the ribosomal stalk of the 50S ribosomal subunit. Forms a multimeric L10(L12)X complex, where L10 forms an elongated spine to which 2 to 4 L12 dimers bind in a sequential fashion. Binds GTP-bound translation factors.

Its function is as follows. Forms part of the ribosomal stalk which helps the ribosome interact with GTP-bound translation factors. Is thus essential for accurate translation. This chain is Large ribosomal subunit protein bL12, found in Methylorubrum populi (strain ATCC BAA-705 / NCIMB 13946 / BJ001) (Methylobacterium populi).